A 99-amino-acid chain; its full sequence is Putative transmembrane protein ORF13 (99 aa).

Transmembrane regions (helical) follow at residues 8-28 (IATF…MAGI), 42-62 (LGLF…YIIV), and 73-93 (GPIT…AIIA).

The protein resides in the host membrane. This chain is Putative transmembrane protein ORF13, found in His1 virus (isolate Australia/Victoria) (His1V).